Here is a 136-residue protein sequence, read N- to C-terminus: Ribosome-binding factor A (136 aa).

Belongs to the RbfA family. Monomer. Binds 30S ribosomal subunits, but not 50S ribosomal subunits or 70S ribosomes.

The protein resides in the cytoplasm. Functionally, one of several proteins that assist in the late maturation steps of the functional core of the 30S ribosomal subunit. Associates with free 30S ribosomal subunits (but not with 30S subunits that are part of 70S ribosomes or polysomes). Required for efficient processing of 16S rRNA. May interact with the 5'-terminal helix region of 16S rRNA. This chain is Ribosome-binding factor A, found in Yersinia pestis bv. Antiqua (strain Antiqua).